A 632-amino-acid polypeptide reads, in one-letter code: Extracellular metalloproteinase 2 (632 aa).

Residues methionine 1–glycine 19 form the signal peptide. The propeptide occupies histidine 20–serine 244. N-linked (GlcNAc...) asparagine glycosylation occurs at asparagine 270. The span at asparagine 294 to asparagine 310 shows a compositional bias: polar residues. Residues asparagine 294–arginine 313 form a disordered region. Histidine 429 contacts Zn(2+). Residue glutamate 430 is part of the active site. Histidine 433 contributes to the Zn(2+) binding site.

The protein belongs to the peptidase M36 family. Requires Zn(2+) as cofactor.

Its subcellular location is the secreted. Functionally, secreted metalloproteinase probably acting as a virulence factor. This chain is Extracellular metalloproteinase 2 (MEP2), found in Arthroderma otae (Microsporum canis).